Reading from the N-terminus, the 357-residue chain is Isopentenyl-diphosphate delta-isomerase (357 aa).

12–13 (RK) contacts substrate. Residues Ser70, 71–73 (SMT), Ser101, and Asn130 contribute to the FMN site. 101 to 103 (SMR) is a substrate binding site. Gln165 serves as a coordination point for substrate. Position 166 (Glu166) interacts with Mg(2+). FMN contacts are provided by residues Lys197 and 310–311 (AR).

Belongs to the IPP isomerase type 2 family. In terms of assembly, homooctamer. Dimer of tetramers. It depends on FMN as a cofactor. The cofactor is NADPH. Mg(2+) is required as a cofactor.

It localises to the cytoplasm. It carries out the reaction isopentenyl diphosphate = dimethylallyl diphosphate. Its function is as follows. Involved in the biosynthesis of isoprenoids. Catalyzes the 1,3-allylic rearrangement of the homoallylic substrate isopentenyl (IPP) to its allylic isomer, dimethylallyl diphosphate (DMAPP). The polypeptide is Isopentenyl-diphosphate delta-isomerase (Pelodictyon phaeoclathratiforme (strain DSM 5477 / BU-1)).